Reading from the N-terminus, the 88-residue chain is Small ribosomal subunit protein bS20 (88 aa).

Belongs to the bacterial ribosomal protein bS20 family.

In terms of biological role, binds directly to 16S ribosomal RNA. The protein is Small ribosomal subunit protein bS20 of Clostridioides difficile (strain 630) (Peptoclostridium difficile).